Here is a 117-residue protein sequence, read N- to C-terminus: G antigen 12J (117 aa).

Residues 1–117 (MSWRGRSTYY…PEEGEKQSQC (117 aa)) form a disordered region. Acidic residues-rich tracts occupy residues 32–45 (FSDEVEPATPEEGE) and 87–96 (ECEDGPDGQE). Basic and acidic residues predominate over residues 103-117 (EEVKTPEEGEKQSQC).

This sequence belongs to the GAGE family.

The protein is G antigen 12J (GAGE12J) of Homo sapiens (Human).